Consider the following 107-residue polypeptide: Glutaconyl-CoA decarboxylase subunit delta (107 aa).

A helical transmembrane segment spans residues 10–32; that stretch reads MINMTIVFGVLIVLGILMVLIHA. The disordered stretch occupies residues 37 to 60; the sequence is KKVQGKKKPVVAKPAPSAAASKRQ. A compositionally biased stretch (low complexity) spans 47–57; it reads VAKPAPSAAAS.

This sequence belongs to the OadG family. As to quaternary structure, heterooctamer consisting of two alpha, two beta, two gamma and two delta subunits.

The protein localises to the cell membrane. It carries out the reaction (2E)-glutaconyl-CoA + Na(+)(in) + H(+) = (2E)-butenoyl-CoA + Na(+)(out) + CO2. The protein operates within amino-acid degradation; L-glutamate degradation via hydroxyglutarate pathway; crotonoyl-CoA from L-glutamate: step 5/5. In terms of biological role, part of the primary sodium pump glutaconyl-CoA decarboxylase (GCD). Possible membrane anchor for the alpha subunit. This is Glutaconyl-CoA decarboxylase subunit delta (gcdD) from Acidaminococcus fermentans (strain ATCC 25085 / DSM 20731 / CCUG 9996 / CIP 106432 / VR4).